A 95-amino-acid chain; its full sequence is Co-chaperonin GroES (95 aa).

It belongs to the GroES chaperonin family. In terms of assembly, heptamer of 7 subunits arranged in a ring. Interacts with the chaperonin GroEL.

The protein resides in the cytoplasm. Its function is as follows. Together with the chaperonin GroEL, plays an essential role in assisting protein folding. The GroEL-GroES system forms a nano-cage that allows encapsulation of the non-native substrate proteins and provides a physical environment optimized to promote and accelerate protein folding. GroES binds to the apical surface of the GroEL ring, thereby capping the opening of the GroEL channel. This chain is Co-chaperonin GroES, found in Novosphingobium aromaticivorans (strain ATCC 700278 / DSM 12444 / CCUG 56034 / CIP 105152 / NBRC 16084 / F199).